The following is a 258-amino-acid chain: Tryptophan synthase alpha chain (258 aa).

Catalysis depends on proton acceptor residues glutamate 47 and aspartate 58.

The protein belongs to the TrpA family. Tetramer of two alpha and two beta chains.

It carries out the reaction (1S,2R)-1-C-(indol-3-yl)glycerol 3-phosphate + L-serine = D-glyceraldehyde 3-phosphate + L-tryptophan + H2O. The protein operates within amino-acid biosynthesis; L-tryptophan biosynthesis; L-tryptophan from chorismate: step 5/5. Functionally, the alpha subunit is responsible for the aldol cleavage of indoleglycerol phosphate to indole and glyceraldehyde 3-phosphate. The polypeptide is Tryptophan synthase alpha chain (Bacillus thuringiensis subsp. konkukian (strain 97-27)).